The chain runs to 374 residues: MARDYYEILGVSRSADKEELKRAYRRLARKYHPDVNKEPGSEERFKEINRAYEILSDPEMKARFDRFGEAGVSGGAASGFSTDFSDSFADIFESFFSGFGGAGTQGRRRTGPVRGDDLRLDLNLEFIEAIFGGDKELTIKHLETCGTCNGSGAKPGTKPQTCSTCGGTGQVRRATRTPFSSFTQVSVCPSCNGSGQIIEEKCVDCGGRGQKEATKKIKITIPGGVDNGTRLRVSNEGDAGRMGGPPGDLYVFLSVKNHPEFQRDGINIISQIKISYLQAILGCCLEINTVDGKTELTIPSGTQPNAILTLEDKGVPRLGNSVSRGAHLITIEIDIPTKITPEEKELLEKLAKIKGERTGKGGIEGFLGSWFQQK.

Residues 4-68 enclose the J domain; it reads DYYEILGVSR…EMKARFDRFG (65 aa). The CR-type zinc finger occupies 132–214; sequence GGDKELTIKH…CGGRGQKEAT (83 aa). The Zn(2+) site is built by C145, C148, C162, C165, C188, C191, C202, and C205. CXXCXGXG motif repeat units follow at residues 145–152, 162–169, 188–195, and 202–209; these read CGTCNGSG, CSTCGGTG, CPSCNGSG, and CVDCGGRG.

It belongs to the DnaJ family. As to quaternary structure, homodimer. Zn(2+) is required as a cofactor.

It is found in the cytoplasm. Participates actively in the response to hyperosmotic and heat shock by preventing the aggregation of stress-denatured proteins and by disaggregating proteins, also in an autonomous, DnaK-independent fashion. Unfolded proteins bind initially to DnaJ; upon interaction with the DnaJ-bound protein, DnaK hydrolyzes its bound ATP, resulting in the formation of a stable complex. GrpE releases ADP from DnaK; ATP binding to DnaK triggers the release of the substrate protein, thus completing the reaction cycle. Several rounds of ATP-dependent interactions between DnaJ, DnaK and GrpE are required for fully efficient folding. Also involved, together with DnaK and GrpE, in the DNA replication of plasmids through activation of initiation proteins. The sequence is that of Chaperone protein DnaJ from Trichodesmium erythraeum (strain IMS101).